The chain runs to 1010 residues: MAARVLIIGSGGREHTLAWKLAQSHHVKQVLVAPGNAGTACSEKISNTAISISDHTALAQFCKEKKIEFVVVGPEAPLAAGIVGNLRSAGVQCFGPTAEAAQLESSKRFAKEFMDRHGIPTAQWKAFTKPEEACSFILSADFPALVVKASGLAAGKGVIVAKSKEEACKAVQEIMQEKAFGAAGETIVIEELLDGEEVSCLCFTDGKTVAPMPPAQDHKRLLEGDGGPNTGGMGAYCPAPQVSNDLLLKIKDTVLQRTVDGMQQEGTPYTGILYAGIMLTKNGPKVLEFNCRFGDPECQVILPLLKSDLYEVIQSTLDGLLCTSLPVWLENHTALTVVMASKGYPGDYTKGVEITGFPEAQALGLEVFHAGTALKNGKVVTHGGRVLAVTAIRENLISALEEAKKGLAAIKFEGAIYRKDVGFRAIAFLQQPRSLTYKESGVDIAAGNMLVKKIQPLAKATSRSGCKVDLGGFAGLFDLKAAGFKDPLLASGTDGVGTKLKIAQLCNKHDTIGQDLVAMCVNDILAQGAEPLFFLDYFSCGKLDLSVTEAVVAGIAKACGKAGCALLGGETAEMPDMYPPGEYDLAGFAVGAMERDQKLPHLERITEGDVVVGIASSGLHSNGFSLVRKIVAKSSLQYSSPAPDGCGDQTLGDLLLTPTRIYSHSLLPVLRSGHVKAFAHITGGGLLENIPRVLPEKLGVDLDAQTWRIPRVFSWLQQEGHLSEEEMARTFNCGVGAVLVVSKEQTEQILRDIQQHKEEAWVIGSVVARAEGSPRVKVKNLIESMQINGSVLKNGSLTNHFSFEKKKARVAVLISGTGSNLQALIDSTREPNSSAQIDIVISNKAAVAGLDKAERAGIPTRVINHKLYKNRVEFDSAIDLVLEEFSIDIVCLAGFMRILSGPFVQKWNGKMLNIHPSLLPSFKGSNAHEQALETGVTVTGCTVHFVAEDVDAGQIILQEAVPVKRGDTVATLSERVKLAEHKIFPAALQLVASGTVQLGENGKICWVKEE.

The residue at position 2 (Ala2) is an N-acetylalanine. A Phosphoserine modification is found at Ser10. Residues 111-318 form the ATP-grasp domain; that stretch reads KEFMDRHGIP…LYEVIQSTLD (208 aa). Residues 190–193, Glu197, Arg220, and Asn229 contribute to the ATP site; that span reads EELL. 2 residues coordinate Mg(2+): Glu288 and Asn290. Lys350 is modified (N6-acetyllysine). Positions 434–809 are AIRS domain; that stretch reads SLTYKESGVD…HFSFEKKKAR (376 aa). Phosphoserine is present on Ser440. Thr682 is modified (phosphothreonine). Ser796 and Ser802 each carry phosphoserine. Residues 810–1010 are GART domain; sequence VAVLISGTGS…NGKICWVKEE (201 aa). 818-820 lines the N(1)-(5-phospho-beta-D-ribosyl)glycinamide pocket; sequence GSN. (6R)-10-formyltetrahydrofolate contacts are provided by residues Arg871, 896–899, and Asn913; that span reads MRIL. His915 functions as the Proton donor in the catalytic mechanism. Residue 947–951 participates in (6R)-10-formyltetrahydrofolate binding; that stretch reads AEDVD. 977 to 980 provides a ligand contact to N(1)-(5-phospho-beta-D-ribosyl)glycinamide; that stretch reads KLAE.

It in the N-terminal section; belongs to the GARS family. This sequence in the central section; belongs to the AIR synthase family. In the C-terminal section; belongs to the GART family. As to quaternary structure, homodimer. It depends on Mg(2+) as a cofactor. Requires Mn(2+) as cofactor.

The catalysed reaction is 5-phospho-beta-D-ribosylamine + glycine + ATP = N(1)-(5-phospho-beta-D-ribosyl)glycinamide + ADP + phosphate + H(+). It catalyses the reaction N(1)-(5-phospho-beta-D-ribosyl)glycinamide + (6R)-10-formyltetrahydrofolate = N(2)-formyl-N(1)-(5-phospho-beta-D-ribosyl)glycinamide + (6S)-5,6,7,8-tetrahydrofolate + H(+). The enzyme catalyses 2-formamido-N(1)-(5-O-phospho-beta-D-ribosyl)acetamidine + ATP = 5-amino-1-(5-phospho-beta-D-ribosyl)imidazole + ADP + phosphate + H(+). The protein operates within purine metabolism; IMP biosynthesis via de novo pathway; 5-amino-1-(5-phospho-D-ribosyl)imidazole from N(2)-formyl-N(1)-(5-phospho-D-ribosyl)glycinamide: step 2/2. It participates in purine metabolism; IMP biosynthesis via de novo pathway; N(1)-(5-phospho-D-ribosyl)glycinamide from 5-phospho-alpha-D-ribose 1-diphosphate: step 2/2. Its pathway is purine metabolism; IMP biosynthesis via de novo pathway; N(2)-formyl-N(1)-(5-phospho-D-ribosyl)glycinamide from N(1)-(5-phospho-D-ribosyl)glycinamide (10-formyl THF route): step 1/1. Functionally, trifunctional enzyme that catalyzes three distinct reactions as part of the 'de novo' inosine monophosphate biosynthetic pathway. This is Trifunctional purine biosynthetic protein adenosine-3 (GART) from Homo sapiens (Human).